The chain runs to 187 residues: Peptidyl-tRNA hydrolase (187 aa).

Tyr-15 contacts tRNA. The active-site Proton acceptor is the His-20. The tRNA site is built by Phe-64, Asn-66, and Asn-112.

The protein belongs to the PTH family. In terms of assembly, monomer.

The protein resides in the cytoplasm. It catalyses the reaction an N-acyl-L-alpha-aminoacyl-tRNA + H2O = an N-acyl-L-amino acid + a tRNA + H(+). Its function is as follows. Hydrolyzes ribosome-free peptidyl-tRNAs (with 1 or more amino acids incorporated), which drop off the ribosome during protein synthesis, or as a result of ribosome stalling. Functionally, catalyzes the release of premature peptidyl moieties from peptidyl-tRNA molecules trapped in stalled 50S ribosomal subunits, and thus maintains levels of free tRNAs and 50S ribosomes. The chain is Peptidyl-tRNA hydrolase from Parabacteroides distasonis (strain ATCC 8503 / DSM 20701 / CIP 104284 / JCM 5825 / NCTC 11152).